The sequence spans 405 residues: L-rhamnonate dehydratase (405 aa).

His33 and Arg59 together coordinate substrate. The Mg(2+) site is built by Asp226, Glu252, and Glu280. The active-site Proton acceptor is the His329. Glu349 contributes to the substrate binding site.

This sequence belongs to the mandelate racemase/muconate lactonizing enzyme family. RhamD subfamily. As to quaternary structure, homooctamer; tetramer of dimers. Requires Mg(2+) as cofactor.

The catalysed reaction is L-rhamnonate = 2-dehydro-3-deoxy-L-rhamnonate + H2O. In terms of biological role, catalyzes the dehydration of L-rhamnonate to 2-keto-3-deoxy-L-rhamnonate (KDR). The sequence is that of L-rhamnonate dehydratase from Escherichia coli O81 (strain ED1a).